We begin with the raw amino-acid sequence, 168 residues long: INO80 complex subunit 3 (168 aa).

Residues 115 to 129 are compositionally biased toward polar residues; sequence TNSTLSTPKSFHSPL. The disordered stretch occupies residues 115–168; it reads TNSTLSTPKSFHSPLQSRGISPSSAQSSAAVSSSRKQKRKRTSEGPSERRARKK. The segment covering 130–148 has biased composition (low complexity); that stretch reads QSRGISPSSAQSSAAVSSS. Basic and acidic residues predominate over residues 156–168; that stretch reads TSEGPSERRARKK.

As to quaternary structure, component of the INO80 chromatin remodeling complex.

The protein localises to the nucleus. In terms of biological role, component of the INO80 complex which remodels chromatin by shifting nucleosomes and is involved in DNA repair. This Schizosaccharomyces pombe (strain 972 / ATCC 24843) (Fission yeast) protein is INO80 complex subunit 3 (iec3).